The sequence spans 253 residues: Vitamin B12 import ATP-binding protein BtuD (253 aa).

The region spanning leucine 4 to aspartate 236 is the ABC transporter domain. Glycine 32–serine 39 lines the ATP pocket.

It belongs to the ABC transporter superfamily. Vitamin B12 importer (TC 3.A.1.13.1) family. The complex is composed of two ATP-binding proteins (BtuD), two transmembrane proteins (BtuC) and a solute-binding protein (BtuF).

Its subcellular location is the cell inner membrane. The catalysed reaction is an R-cob(III)alamin(out) + ATP + H2O = an R-cob(III)alamin(in) + ADP + phosphate + H(+). In terms of biological role, part of the ABC transporter complex BtuCDF involved in vitamin B12 import. Responsible for energy coupling to the transport system. In Yersinia enterocolitica serotype O:8 / biotype 1B (strain NCTC 13174 / 8081), this protein is Vitamin B12 import ATP-binding protein BtuD.